A 401-amino-acid polypeptide reads, in one-letter code: Putative hetero-Diels-Alderase asR5 (401 aa).

Residues 1–21 (MRRSFLISAALGLSMSTPALA) form the signal peptide. N-linked (GlcNAc...) asparagine glycans are attached at residues asparagine 71, asparagine 77, asparagine 240, and asparagine 334.

The protein belongs to the eupF Diels-Alderase family.

It functions in the pathway secondary metabolite biosynthesis; terpenoid biosynthesis. Functionally, putative hetero-Diels-Alderase; part of the gene cluster that mediates the biosynthesis of xenovulene A, an unusual meroterpenoid that has potent inhibitory effects on the human gamma-aminobutyrate A (GABAA) benzodiazepine receptor. The first step of xenovulene A biosynthesis is the biosynthesis of 3-methylorcinaldehyde performed by the non-reducing polyketide synthase aspks1. The salicylate hydroxylase asL1 then catalyzes the oxidative dearomatization of 3-methylorcinaldehyde to yield a dearomatized hydroxycyclohexadione. The 2-oxoglutarate-dependent dioxygenase asL3 further catalyzes the oxidative ring expansion to provide the first tropolone metabolite. The cytochrome P450 monooxygenase asR2 allows the synthesis of tropolone hemiacetal. In parallel, a previously unrecognised class of terpene cyclase, asR6, produces alpha-humulene from farnesylpyrophosphate (FPP). The putative Diels-Alderase asR5 probably catalyzes the formation of the tropolone-humulene skeleton by linking humulene and the polyketide moiety. Oxidative-ring contractions catalyzed by asL4 and asL6 then processively remove carbon atoms from the polyketide to yield xenovulene A. The protein is Putative hetero-Diels-Alderase asR5 of Sarocladium schorii (Acremonium strictum (strain IMI 501407)).